Here is a 410-residue protein sequence, read N- to C-terminus: Threonylcarbamoyladenosine tRNA methylthiotransferase MtaB (410 aa).

Residues 1 to 113 enclose the MTTase N-terminal domain; it reads MKVAFETLGC…LLKILEEYLE (113 aa). Positions 10, 46, 77, 152, 156, and 159 each coordinate [4Fe-4S] cluster. The Radical SAM core domain occupies 138–366; sequence YFEGVRPFLK…KELDQKKRQE (229 aa).

Belongs to the methylthiotransferase family. MtaB subfamily. [4Fe-4S] cluster is required as a cofactor.

The protein localises to the cytoplasm. The enzyme catalyses N(6)-L-threonylcarbamoyladenosine(37) in tRNA + (sulfur carrier)-SH + AH2 + 2 S-adenosyl-L-methionine = 2-methylsulfanyl-N(6)-L-threonylcarbamoyladenosine(37) in tRNA + (sulfur carrier)-H + 5'-deoxyadenosine + L-methionine + A + S-adenosyl-L-homocysteine + 2 H(+). In terms of biological role, catalyzes the methylthiolation of N6-threonylcarbamoyladenosine (t(6)A), leading to the formation of 2-methylthio-N6-threonylcarbamoyladenosine (ms(2)t(6)A) at position 37 in tRNAs that read codons beginning with adenine. In Aquifex aeolicus (strain VF5), this protein is Threonylcarbamoyladenosine tRNA methylthiotransferase MtaB (mtaB).